Here is a 569-residue protein sequence, read N- to C-terminus: Urease subunit alpha (569 aa).

The Urease domain occupies 131-569 (GAIDSHIHFI…LPLAQRYLLL (439 aa)). The Ni(2+) site is built by His136, His138, and Lys219. Lys219 is modified (N6-carboxylysine). His221 contacts substrate. Residues His248 and His274 each coordinate Ni(2+). The active-site Proton donor is His322. Asp362 serves as a coordination point for Ni(2+).

It belongs to the metallo-dependent hydrolases superfamily. Urease alpha subunit family. As to quaternary structure, heterotrimer of UreA (gamma), UreB (beta) and UreC (alpha) subunits. Three heterotrimers associate to form the active enzyme. Requires Ni cation as cofactor. Carboxylation allows a single lysine to coordinate two nickel ions.

The protein resides in the cytoplasm. It carries out the reaction urea + 2 H2O + H(+) = hydrogencarbonate + 2 NH4(+). Its pathway is nitrogen metabolism; urea degradation; CO(2) and NH(3) from urea (urease route): step 1/1. This Prochlorococcus marinus (strain NATL2A) protein is Urease subunit alpha.